A 907-amino-acid chain; its full sequence is Aldehyde oxidoreductase (907 aa).

One can recognise a 2Fe-2S ferredoxin-type domain in the interval 2-79 (IQKVITVNGI…GAQITTIEGV (78 aa)). [2Fe-2S] cluster-binding residues include Cys40, Cys45, Cys48, Cys60, Cys100, Cys103, Cys137, and Cys139. His653 and Glu869 together coordinate Mo-molybdopterin cytosine dinucleotide.

This sequence belongs to the xanthine dehydrogenase family. In terms of assembly, homodimer. Mo-molybdopterin cytosine dinucleotide serves as cofactor. The cofactor is [2Fe-2S] cluster.

It catalyses the reaction an aldehyde + A + H2O = a carboxylate + AH2 + H(+). This is Aldehyde oxidoreductase (mop) from Megalodesulfovibrio gigas (Desulfovibrio gigas).